Reading from the N-terminus, the 265-residue chain is Early E4 31 kDa protein (265 aa).

The protein belongs to the adenoviridae E4 30 to 34 kDa protein family. As to quaternary structure, interacts with E1B-55k.

The protein resides in the host nucleus. The protein localises to the host cytoplasm. In terms of biological role, plays a major role to prevent cellular inhibition of viral genome replication by nuclear bodies. Assembles an SCF-like E3 ubiquitin ligase complex based on the cellular proteins ELOB, ELOC, CUL5 and RBX1, in cooperation with viral E1B-55K. This viral RING-type ligase ubiquitinates cellular substrates prior to proteasomal degradation: p53/TP53, LIG4, MRE11-RAD50-NBS1 (MRN) complex, ITGA3, DAXX and BLM. The chain is Early E4 31 kDa protein from Canine adenovirus serotype 1 (strain RI261) (CAdV-1).